The chain runs to 540 residues: Chaperonin GroEL 1 (540 aa).

Residues 29–32, 86–90, glycine 413, 477–479, and aspartate 493 each bind ATP; these read TLGP, DGTTT, and NAA.

Belongs to the chaperonin (HSP60) family. As to quaternary structure, forms a cylinder of 14 subunits composed of two heptameric rings stacked back-to-back. Interacts with the co-chaperonin GroES.

Its subcellular location is the cytoplasm. The enzyme catalyses ATP + H2O + a folded polypeptide = ADP + phosphate + an unfolded polypeptide.. In terms of biological role, together with its co-chaperonin GroES, plays an essential role in assisting protein folding. The GroEL-GroES system forms a nano-cage that allows encapsulation of the non-native substrate proteins and provides a physical environment optimized to promote and accelerate protein folding. This Salinispora arenicola (strain CNS-205) protein is Chaperonin GroEL 1.